A 969-amino-acid polypeptide reads, in one-letter code: RNA polymerase-associated protein RapA (969 aa).

Residues 164-334 form the Helicase ATP-binding domain; it reads EVGRRHAPRV…FARLRLLDPD (171 aa). 177–184 lines the ATP pocket; sequence DEVGLGKT. The short motif at 280–283 is the DEAH box element; it reads DEAH. In terms of domain architecture, Helicase C-terminal spans 492 to 646; the sequence is RVNWLLEKVK…TCPTGRAVYD (155 aa).

This sequence belongs to the SNF2/RAD54 helicase family. RapA subfamily. As to quaternary structure, interacts with the RNAP. Has a higher affinity for the core RNAP than for the holoenzyme. Its ATPase activity is stimulated by binding to RNAP.

Transcription regulator that activates transcription by stimulating RNA polymerase (RNAP) recycling in case of stress conditions such as supercoiled DNA or high salt concentrations. Probably acts by releasing the RNAP, when it is trapped or immobilized on tightly supercoiled DNA. Does not activate transcription on linear DNA. Probably not involved in DNA repair. In Vibrio campbellii (strain ATCC BAA-1116), this protein is RNA polymerase-associated protein RapA.